The primary structure comprises 88 residues: MANIKSQKKRILTNEKARLRNNAVKSELKTAVRAVNQAVEAGNKETAGEALVHASRKLDKAVSKGVIHSNQAANRKSAISKKVSALKG.

It belongs to the bacterial ribosomal protein bS20 family.

Its function is as follows. Binds directly to 16S ribosomal RNA. The chain is Small ribosomal subunit protein bS20 from Renibacterium salmoninarum (strain ATCC 33209 / DSM 20767 / JCM 11484 / NBRC 15589 / NCIMB 2235).